Consider the following 493-residue polypeptide: D-aminoacyl-tRNA deacylase (493 aa).

The segment covering 22 to 37 has biased composition (basic and acidic residues); that stretch reads DLGDWERRDDPSRPDA. 2 disordered regions span residues 22–44 and 441–493; these read DLGD…GTYY and PEGP…EPSE.

Belongs to the DtdA deacylase family. Monomer. Zn(2+) serves as cofactor.

The enzyme catalyses a D-aminoacyl-tRNA + H2O = a tRNA + a D-alpha-amino acid + H(+). It catalyses the reaction glycyl-tRNA(Ala) + H2O = tRNA(Ala) + glycine + H(+). Its function is as follows. D-aminoacyl-tRNA deacylase with broad substrate specificity. By recycling D-aminoacyl-tRNA to D-amino acids and free tRNA molecules, this enzyme counteracts the toxicity associated with the formation of D-aminoacyl-tRNA entities in vivo. This chain is D-aminoacyl-tRNA deacylase, found in Halorubrum lacusprofundi (strain ATCC 49239 / DSM 5036 / JCM 8891 / ACAM 34).